Here is a 404-residue protein sequence, read N- to C-terminus: Magnesium transporter NIPA4 (404 aa).

Topologically, residues 1 to 55 (MELRVSNTSCENGSLLHLYCSSQEVLCQIVNDLSPEVPSNATFHSWQERIRQNYG) are extracellular. N-linked (GlcNAc...) asparagine glycans are attached at residues N7, N12, and N40. The chain crosses the membrane as a helical span at residues 56-76 (FYIGLGLAFLSSFLIGSSVIL). Residues 77–102 (KKKGLLRLVATGATRAVDGGFGYLKD) are Cytoplasmic-facing. Residues 103 to 123 (AMWWAGFLTMAAGEVANFGAY) traverse the membrane as a helical segment. Residue A124 is a topological domain, extracellular. The helical transmembrane segment at 125-145 (FAPATVVTPLGALSVLISAIL) threads the bilayer. Residues 146–153 (SSYFLRES) lie on the Cytoplasmic side of the membrane. The chain crosses the membrane as a helical span at residues 154 to 174 (LNLLGKLGCVICVAGSTVMVI). Topologically, residues 175–195 (HAPEEEKVTTIMEMASKMKDT) are extracellular. The chain crosses the membrane as a helical span at residues 196-216 (GFIVFAVLLLVSCLILIFVIA). Residues 217-223 (PRYGQRN) lie on the Cytoplasmic side of the membrane. A helical transmembrane segment spans residues 224-244 (ILIYIIICSVIGAFSVAAVKG). At 245 to 261 (LGITIKNFFQGLPVVRH) the chain is on the extracellular side. The helical transmembrane segment at 262–282 (PLPYILSLILALSLSTQVNFL) threads the bilayer. Topologically, residues 283 to 293 (NRALDIFNTSL) are cytoplasmic. The chain crosses the membrane as a helical span at residues 294–314 (VFPIYYVFFTTVVVTSSIILF). Over 315–324 (KEWYSMSAVD) the chain is Extracellular. The helical transmembrane segment at 325-345 (IAGTLSGFVTIILGVFMLHAF) threads the bilayer. Topologically, residues 346–404 (KDLDISCASLPHMHKNPPPSPAPEPTVIRLEDKNVLVDNIELASTSSPEEKPKVFIIHS) are cytoplasmic.

It belongs to the NIPA family. Highly expressed in brain, lung, stomach, keratinocytes and leukocytes, and in all other tissues tested except liver, thyroid and fetal brain.

Its subcellular location is the cell membrane. The enzyme catalyses Mg(2+)(in) = Mg(2+)(out). In terms of biological role, acts as a Mg(2+) transporter. Can also transport other divalent cations such as Ba(2+), Sr(2+) and Fe(2+) but to a much less extent than Mg(2+). May be a receptor for ligands (trioxilins A3 and B3) from the hepoxilin pathway. In Homo sapiens (Human), this protein is Magnesium transporter NIPA4 (NIPAL4).